The sequence spans 366 residues: MSGNTLGTLFTVTTFGESHGPAIGCVIDGCPPGMGLTEADIQVELDRRKPGTSRHVTQRQEADEVEILSGVFEGVTTGTPIALLIRNTDQRSKDYGNIVETFRPGHADYTYWQKYGIRDYRGGGRSSARLTAPIVGAGAVAKKWLRERFGVEVRGYMSCLGDIDVPFVDWSHVRENPFFSPNAAIVPELEAYMDALRKDGDSIGARIDVVASGVPVGWGEPVFDRLDADIAKAMMSINAVKGVEIGAGFDSVAQRGSVHGDELTPAGFIGNHAGGVLGGISTGQDITVSIAIKPTSSIRTPRRSITKAGDEATVETFGRHDPCVGIRATPIAESMLALVLIDHALRHRAQCGDVETSTPKISGSAT.

NADP(+) contacts are provided by Arg48 and Arg54. Residues 125-127 (RSS), 238-239 (NA), Gly278, 293-297 (KPTSS), and Arg319 contribute to the FMN site.

Belongs to the chorismate synthase family. Homotetramer. It depends on FMNH2 as a cofactor.

The enzyme catalyses 5-O-(1-carboxyvinyl)-3-phosphoshikimate = chorismate + phosphate. It functions in the pathway metabolic intermediate biosynthesis; chorismate biosynthesis; chorismate from D-erythrose 4-phosphate and phosphoenolpyruvate: step 7/7. Functionally, catalyzes the anti-1,4-elimination of the C-3 phosphate and the C-6 proR hydrogen from 5-enolpyruvylshikimate-3-phosphate (EPSP) to yield chorismate, which is the branch point compound that serves as the starting substrate for the three terminal pathways of aromatic amino acid biosynthesis. This reaction introduces a second double bond into the aromatic ring system. The chain is Chorismate synthase from Burkholderia ambifaria (strain MC40-6).